We begin with the raw amino-acid sequence, 573 residues long: Sulfite reductase [NADPH] hemoprotein beta-component (573 aa).

4 residues coordinate [4Fe-4S] cluster: cysteine 438, cysteine 444, cysteine 483, and cysteine 487. Cysteine 487 serves as a coordination point for siroheme.

This sequence belongs to the nitrite and sulfite reductase 4Fe-4S domain family. As to quaternary structure, alpha(8)-beta(8). The alpha component is a flavoprotein, the beta component is a hemoprotein. Requires siroheme as cofactor. The cofactor is [4Fe-4S] cluster.

The catalysed reaction is hydrogen sulfide + 3 NADP(+) + 3 H2O = sulfite + 3 NADPH + 4 H(+). It participates in sulfur metabolism; hydrogen sulfide biosynthesis; hydrogen sulfide from sulfite (NADPH route): step 1/1. In terms of biological role, component of the sulfite reductase complex that catalyzes the 6-electron reduction of sulfite to sulfide. This is one of several activities required for the biosynthesis of L-cysteine from sulfate. This Geobacillus thermodenitrificans (strain NG80-2) protein is Sulfite reductase [NADPH] hemoprotein beta-component.